We begin with the raw amino-acid sequence, 99 residues long: A-type ATP synthase subunit F (99 aa).

It belongs to the V-ATPase F subunit family. As to quaternary structure, has multiple subunits with at least A(3), B(3), C, D, E, F, H, I and proteolipid K(x).

It is found in the cell membrane. In terms of biological role, component of the A-type ATP synthase that produces ATP from ADP in the presence of a proton gradient across the membrane. This Methanocella arvoryzae (strain DSM 22066 / NBRC 105507 / MRE50) protein is A-type ATP synthase subunit F.